The chain runs to 415 residues: Probable RAD2-like endonuclease 369L (415 aa).

The segment at methionine 1 to leucine 114 is N-domain. Mg(2+) contacts are provided by aspartate 34, glutamate 86, glutamate 198, glutamate 200, aspartate 219, aspartate 221, and aspartate 277. The tract at residues valine 163–glutamine 297 is I-domain.

The protein belongs to the XPG/RAD2 endonuclease family. Mg(2+) serves as cofactor.

It is found in the host nucleus. In terms of biological role, probable endonuclease. This chain is Probable RAD2-like endonuclease 369L, found in Acheta domesticus (House cricket).